A 265-amino-acid chain; its full sequence is Zwei Ig domain protein zig-1 (265 aa).

Residues 1–17 form the signal peptide; it reads MKNLLLITFFVVSTVTA. The Extracellular segment spans residues 18–232; sequence LGGRGSKSAL…KMVDVRSEFQ (215 aa). 2 consecutive Ig-like C2-type domains span residues 41–108 and 120–220; these read HATD…TPHG and PVVH…MLLV. Asn83 and Asn193 each carry an N-linked (GlcNAc...) asparagine glycan. A disulfide bond links Cys155 and Cys202. A helical transmembrane segment spans residues 233–253; that stretch reads WVYPLAVILITIFLLVVIIVF. The Cytoplasmic segment spans residues 254-265; the sequence is CEWRNKKSTSKA.

As to expression, expressed in neurons and body wall muscles.

The protein resides in the cell membrane. In terms of biological role, probably not involved in maintaining the position of ASI and ASH head neuron cell bodies and ventral nerve cord axons of PVQ, PVP, RMEV, AVK and HSN neurons. This Caenorhabditis elegans protein is Zwei Ig domain protein zig-1.